A 40-amino-acid polypeptide reads, in one-letter code: uncharacterized protein (40 aa).

This is an uncharacterized protein from Haemophilus influenzae (strain ATCC 51907 / DSM 11121 / KW20 / Rd).